Consider the following 391-residue polypeptide: Probable protein phosphatase 2C 32 (391 aa).

The segment at 1–53 (MSCTVAIPSSPVFSPSRRPLSCKAASASASPESVSVAASSPAQAAPPAGSPLR) is disordered. Positions 8-51 (PSSPVFSPSRRPLSCKAASASASPESVSVAASSPAQAAPPAGSP) are enriched in low complexity. Residues 95–115 (LVVPVCGGAAAAAAAAAVAAV) form a helical membrane-spanning segment. A PPM-type phosphatase domain is found at 129–386 (EFAVYCRRGK…DDISIVIIQL (258 aa)). Residues D168, G169, D332, and D377 each contribute to the Mn(2+) site.

Belongs to the PP2C family. It depends on Mg(2+) as a cofactor. The cofactor is Mn(2+).

The protein localises to the membrane. The enzyme catalyses O-phospho-L-seryl-[protein] + H2O = L-seryl-[protein] + phosphate. It carries out the reaction O-phospho-L-threonyl-[protein] + H2O = L-threonyl-[protein] + phosphate. In Oryza sativa subsp. japonica (Rice), this protein is Probable protein phosphatase 2C 32.